The chain runs to 599 residues: MIDINVNNIFFRSYSVDPNSGHAIYVFDSTYLPASDEIGDKQVYDLLINALMDRLVMKLPQAPYSLVIFSSGFSQRKISWVYGIKMFAKLPKETKFYLQKIFIVHESFFVRSVYQVISNAMNFNFLDSKDSQHDFPSLVHVLDLTSLSELIDITRLRISLNVYLYDYQIREHINVPEEYYNRLTPLAIRQYRQLVFDKIFKKLQNDALLCELIFQKPGNYKKVNIFLDIIKRNNYIDLSQWDIYSLASVWLNYFIKNKAKPLIPIELIPLPIVDDLKFTSETFRKIIKFNQYQDLFMVIIPFFNRIIAHGESTKHDSRTLSKALTPALCKEKLSMMTNDRLAIGSRYIKNLLDFFPEIAKEISSPPSSVSSSSTIPVLPKPRKSSPTRYSELGCLTLPRSRSPSPQRSVTSPTYTPVALQNTPVLKPKSSSRNVSSPSFNAKPPLPIKAVTRPQLSLTSNSNTDLALASSSTDTLSSPTKTPSADSLPLSNSSTDLTISDNIKEMVKDEPAKDKNSVETDIFVQQFESLTLVQNAKIKKFDKELQEKKKKNETTSKTADKFSQKGYSDIKASNKVSRLAALYEERLQGLQVMNEMKQRW.

Residues 181-359 form the Rho-GAP domain; it reads NRLTPLAIRQ…NLLDFFPEIA (179 aa). Disordered regions lie at residues 362 to 447, 468 to 495, and 543 to 563; these read ISSP…PLPI, ASSSTDTLSSPTKTPSADSLPLSNSSTD, and ELQEKKKKNETTSKTADKFSQ. Low complexity-rich tracts occupy residues 363–373, 396–413, and 468–483; these read SSPPSSVSSSS, TLPRSRSPSPQRSVTSPT, and ASSSTDTLSSPTKTPS. Residues 543–562 show a composition bias toward basic and acidic residues; that stretch reads ELQEKKKKNETTSKTADKFS.

The protein localises to the cytoplasm. Its function is as follows. May be involved in cell wall organization and biogenesis. In Saccharomyces cerevisiae (strain ATCC 204508 / S288c) (Baker's yeast), this protein is Protein ECM25 (ECM25).